Reading from the N-terminus, the 269-residue chain is Shikimate dehydrogenase (NADP(+)) (269 aa).

Residues Ser-14–Ser-16 and Thr-61 contribute to the shikimate site. Catalysis depends on Lys-65, which acts as the Proton acceptor. Glu-77 is an NADP(+) binding site. The shikimate site is built by Asn-86 and Asp-102. Residues Gly-126–Ala-130, Asn-150–Lys-155, and Met-213 each bind NADP(+). Tyr-215 lines the shikimate pocket. An NADP(+)-binding site is contributed by Gly-237.

It belongs to the shikimate dehydrogenase family. In terms of assembly, homodimer.

The catalysed reaction is shikimate + NADP(+) = 3-dehydroshikimate + NADPH + H(+). It participates in metabolic intermediate biosynthesis; chorismate biosynthesis; chorismate from D-erythrose 4-phosphate and phosphoenolpyruvate: step 4/7. In terms of biological role, involved in the biosynthesis of the chorismate, which leads to the biosynthesis of aromatic amino acids. Catalyzes the reversible NADPH linked reduction of 3-dehydroshikimate (DHSA) to yield shikimate (SA). The protein is Shikimate dehydrogenase (NADP(+)) of Aliivibrio fischeri (strain ATCC 700601 / ES114) (Vibrio fischeri).